The following is a 149-amino-acid chain: Deoxyuridine 5'-triphosphate nucleotidohydrolase (149 aa).

Residues 68 to 70 (RSG), Asn81, and 85 to 87 (LID) each bind substrate.

The protein belongs to the dUTPase family. Requires Mg(2+) as cofactor.

The catalysed reaction is dUTP + H2O = dUMP + diphosphate + H(+). Its pathway is pyrimidine metabolism; dUMP biosynthesis; dUMP from dCTP (dUTP route): step 2/2. In terms of biological role, this enzyme is involved in nucleotide metabolism: it produces dUMP, the immediate precursor of thymidine nucleotides and it decreases the intracellular concentration of dUTP so that uracil cannot be incorporated into DNA. This is Deoxyuridine 5'-triphosphate nucleotidohydrolase from Nitrosomonas eutropha (strain DSM 101675 / C91 / Nm57).